A 244-amino-acid chain; its full sequence is Phosphoadenosine 5'-phosphosulfate reductase (244 aa).

Cys239 (nucleophile; cysteine thiosulfonate intermediate) is an active-site residue.

It belongs to the PAPS reductase family. CysH subfamily.

Its subcellular location is the cytoplasm. The enzyme catalyses [thioredoxin]-disulfide + sulfite + adenosine 3',5'-bisphosphate + 2 H(+) = [thioredoxin]-dithiol + 3'-phosphoadenylyl sulfate. It functions in the pathway sulfur metabolism; hydrogen sulfide biosynthesis; sulfite from sulfate: step 3/3. Catalyzes the formation of sulfite from phosphoadenosine 5'-phosphosulfate (PAPS) using thioredoxin as an electron donor. The sequence is that of Phosphoadenosine 5'-phosphosulfate reductase from Salmonella schwarzengrund (strain CVM19633).